Here is a 326-residue protein sequence, read N- to C-terminus: MDIKLGKYKPTKEEYIKSFKDMLLLRRFEEKCGQLYGMGEIGGFCHLYIGQEAVISAIDMVKQKGDSTITSYRDHAHIILAGTEPKYVLAELMGRATGCSKGKGGSMHLFNVPNKFYGGHGIVGAQVPIGTGLAFVEKYNDTHNICFTFLGDGAVNQGQVYEAFNMAALWGLPVVYIIENNEYSMGTSVARSTFMRDLYKKGASFGIKGFQLDGMDFEEMYDGSKQAAEYVRENSFPLILEVKTYRYRGHSMSDPAKYRSKEEVEQYKERDPLVIIRKTILDNKYVTEADLKAIEQSVKEIVKEAVEFSENSPLPDEGELYTQVYC.

In terms of assembly, heterodimer of an alpha and a beta chain. Thiamine diphosphate is required as a cofactor.

It carries out the reaction N(6)-[(R)-lipoyl]-L-lysyl-[protein] + pyruvate + H(+) = N(6)-[(R)-S(8)-acetyldihydrolipoyl]-L-lysyl-[protein] + CO2. In terms of biological role, the pyruvate dehydrogenase complex catalyzes the overall conversion of pyruvate to acetyl-CoA and CO(2). It contains multiple copies of three enzymatic components: pyruvate dehydrogenase (E1), dihydrolipoamide acetyltransferase (E2) and lipoamide dehydrogenase (E3). This is Pyruvate dehydrogenase E1 component subunit alpha (pdhA) from Rickettsia conorii (strain ATCC VR-613 / Malish 7).